The following is a 473-amino-acid chain: H(+)/Cl(-) exchange transporter ClcA (473 aa).

Residues Met-1–Pro-32 are Cytoplasmic-facing. The helical transmembrane segment at Leu-33–Val-69 threads the bilayer. At Gln-70–Phe-76 the chain is on the periplasmic side. A helical membrane pass occupies residues Leu-77–Phe-100. The Selectivity filter part_1 motif lies at Gly-106–Pro-110. Ser-107 serves as a coordination point for chloride. The helical intramembrane region spans Ile-109 to Leu-116. Over Glu-117–Arg-123 the chain is Cytoplasmic. 2 helical membrane-spanning segments follow: residues Trp-124–Ala-141 and Glu-148–Phe-166. Residues Gly-146 to Pro-150 carry the Selectivity filter part_2 motif. The Cytoplasmic segment spans residues Arg-167–Thr-176. 2 intramembrane regions (helical) span residues Leu-177–Ala-189 and Pro-193–Ile-201. The Cytoplasmic segment spans residues Glu-202–Ser-214. A helical transmembrane segment spans residues Ile-215–Phe-232. Over Asn-233–Leu-252 the chain is Periplasmic. Residues Trp-253–Gln-281 form a helical membrane-spanning segment. Over Arg-282–Glu-287 the chain is Cytoplasmic. Residues Ile-288 to Glu-309 traverse the membrane as a helical segment. Over Pro-310–Ser-329 the chain is Periplasmic. Transmembrane regions (helical) follow at residues Val-330 to Ser-349 and Gly-355 to Ala-376. Residues Gly-355–Pro-359 carry the Selectivity filter part_3 motif. 2 residues coordinate chloride: Ile-356 and Phe-357. The Periplasmic segment spans residues Val-377–Ala-386. Residues Gly-387–Ser-401 constitute an intramembrane region (helical). Positions Val-402–Ala-404 form an intramembrane region, note=Loop between two helices. Residues Pro-405–Thr-416 constitute an intramembrane region (helical). The segment at residues Asp-417–Leu-421 is an intramembrane region (note=Loop between two helices). A helical membrane pass occupies residues Ile-422–Phe-438. Over Leu-439–Thr-473 the chain is Cytoplasmic. Tyr-445 contributes to the chloride binding site.

Belongs to the chloride channel (TC 2.A.49) family. ClcA subfamily. Homodimer.

The protein resides in the cell inner membrane. The catalysed reaction is 2 chloride(in) + H(+)(out) = 2 chloride(out) + H(+)(in). Functionally, proton-coupled chloride transporter. Functions as antiport system and exchanges two chloride ions for 1 proton. Probably acts as an electrical shunt for an outwardly-directed proton pump that is linked to amino acid decarboxylation, as part of the extreme acid resistance (XAR) response. This chain is H(+)/Cl(-) exchange transporter ClcA, found in Salmonella newport (strain SL254).